Here is a 160-residue protein sequence, read N- to C-terminus: Putative pre-16S rRNA nuclease (160 aa).

Belongs to the YqgF nuclease family.

It is found in the cytoplasm. In terms of biological role, could be a nuclease involved in processing of the 5'-end of pre-16S rRNA. The chain is Putative pre-16S rRNA nuclease from Gluconobacter oxydans (strain 621H) (Gluconobacter suboxydans).